The following is a 400-amino-acid chain: NADPH dehydrogenase 3 (400 aa).

Residues Thr-38 and Gln-115 each coordinate FMN. His-192 and Asn-195 together coordinate substrate. Tyr-197 acts as the Proton donor in catalysis. Positions 244 and 349 each coordinate FMN. Substrate is bound at residue Tyr-376.

Homodimer or heterodimer with OYE2. It depends on FMN as a cofactor.

It catalyses the reaction A + NADPH + H(+) = AH2 + NADP(+). Flavin-dependent enoate reductase that catalyzes the chemo- and stereoslective hydrogenation of electron-poor alkenes. The enzyme is reduced by NADPH, and oxygen, quinones, and alpha,beta-unsaturated aldehydes and ketones can act as electron acceptors to complete catalytic turnover. The physiological oxidant remains elusive. Has a prooxidant activity, increasing reactive oxygen species (ROS) levels when overexpressed. Formation of OYE2-OYE3 heterodimers contribute to the induction of programmed cell death upon oxidative stress. In Saccharomyces cerevisiae (strain ATCC 204508 / S288c) (Baker's yeast), this protein is NADPH dehydrogenase 3.